Reading from the N-terminus, the 581-residue chain is Spastin (581 aa).

A compositionally biased stretch (basic residues) spans 1-12; the sequence is MSSPAGRRKKKG. The segment at 1–39 is disordered; sequence MSSPAGRRKKKGSGGASPAPARPPPPAAVPAPAAGPAPA. Positions 1 to 48 are required for nuclear localization; it reads MSSPAGRRKKKGSGGASPAPARPPPPAAVPAPAAGPAPAPGSPHKRNL. Residues 1–54 lie on the Cytoplasmic side of the membrane; that stretch reads MSSPAGRRKKKGSGGASPAPARPPPPAAVPAPAAGPAPAPGSPHKRNLYYFSYP. The tract at residues 1-78 is required for interaction with ATL1; it reads MSSPAGRRKK…LGLLFVWLCQ (78 aa). Residues 1-191 form a required for midbody localization region; sequence MSSPAGRRKK…LVMAKDRLQL (191 aa). The required for interaction with RTN1 stretch occupies residues 1–265; sequence MSSPAGRRKK…GTSKPNRTNK (265 aa). Residues 4–11 carry the Nuclear localization signal motif; sequence PAGRRKKK. Pro residues predominate over residues 20–39; that stretch reads PARPPPPAAVPAPAAGPAPA. The interval 48–85 is required for interaction with SSNA1 and microtubules; that stretch reads LYYFSYPLVVGFALLRLLACHLGLLFVWLCQRFSRALM. The helical intramembrane region spans 55 to 75; it reads LVVGFALLRLLACHLGLLFVW. The Nuclear export signal signature appears at 57–65; sequence VGFALLRLL. At 76-581 the chain is on the cytoplasmic side; it reads LCQRFSRALM…WNKDFGDTTV (506 aa). A disordered region spans residues 90–111; sequence SSGTAPAPASPSTPAPGPGGEA. The segment covering 97-106 has biased composition (pro residues); sequence PASPSTPAPG. Residues 118–192 enclose the MIT domain; it reads HKQAFEYISI…VMAKDRLQLL (75 aa). The segment at 193-581 is sufficient for microtubule severing; that stretch reads ESGAVPKKKD…WNKDFGDTTV (389 aa). Residues 195–277 are disordered; that stretch reads GAVPKKKDPL…TPTTAVRKKK (83 aa). A compositionally biased stretch (polar residues) spans 206–225; the sequence is HASNSLPRSKTVMKSGSTGL. Phosphoserine occurs at positions 210 and 233. Residues 235-293 form a required for interaction with microtubules and microtubule severing region; that stretch reads SGLSMVSGARPGSGPAATTHKGTSKPNRTNKPSTPTTAVRKKKDLKNFRNVDSNLANLI. Residues 254–271 show a composition bias toward polar residues; it reads HKGTSKPNRTNKPSTPTT. At Thr271 the chain carries Phosphothreonine. The short motif at 274–277 is the Nuclear localization signal element; that stretch reads RKKK. 347–354 lines the ATP pocket; it reads GPPGNGKT. Position 562 is a phosphoserine (Ser562).

The protein belongs to the AAA ATPase family. Spastin subfamily. Homohexamer. Mostly monomeric, but assembles into hexameric structure for short periods of time. Oligomerization seems to be a prerequisite for catalytic activity. Binding to ATP in a cleft between two adjacent subunits stabilizes the homohexameric form. Binds to microtubules at least in part via the alpha-tubulin and beta-tubulin tails. The hexamer adopts a ring conformation through which microtubules pass prior to being severed. Does not interact strongly with tubulin heterodimers. Interacts (via MIT domain) with CHMP1B; the interaction is direct. Interacts with SSNA1. Interacts with ATL1. Interacts with RTN1. Interacts with ZFYVE27. Interacts with REEP1. Interacts (via MIT domain) with IST1.

It localises to the membrane. The protein localises to the endoplasmic reticulum. It is found in the midbody. Its subcellular location is the cytoplasm. The protein resides in the cytoskeleton. It localises to the microtubule organizing center. The protein localises to the centrosome. It is found in the perinuclear region. Its subcellular location is the nucleus. The protein resides in the spindle. It localises to the cell projection. The protein localises to the axon. The enzyme catalyses n ATP + n H2O + a microtubule = n ADP + n phosphate + (n+1) alpha/beta tubulin heterodimers.. Its activity is regulated as follows. Allosteric enzyme with a cooperative mechanism; at least two neighbor subunits influence each other strongly in spastin hexamers. Microtubule binding promotes cooperative interactions among spastin subunits. Its function is as follows. ATP-dependent microtubule severing protein that specifically recognizes and cuts microtubules that are polyglutamylated. Preferentially recognizes and acts on microtubules decorated with short polyglutamate tails: severing activity increases as the number of glutamates per tubulin rises from one to eight, but decreases beyond this glutamylation threshold. Severing activity is not dependent on tubulin acetylation or detyrosination. Microtubule severing promotes reorganization of cellular microtubule arrays and the release of microtubules from the centrosome following nucleation. It is critical for the biogenesis and maintenance of complex microtubule arrays in axons, spindles and cilia. SPAST is involved in abscission step of cytokinesis and nuclear envelope reassembly during anaphase in cooperation with the ESCRT-III complex. Recruited at the midbody, probably by IST1, and participates in membrane fission during abscission together with the ESCRT-III complex. Recruited to the nuclear membrane by IST1 and mediates microtubule severing, promoting nuclear envelope sealing and mitotic spindle disassembly during late anaphase. Required for membrane traffic from the endoplasmic reticulum (ER) to the Golgi and endosome recycling. Recruited by IST1 to endosomes and regulates early endosomal tubulation and recycling by mediating microtubule severing. Probably plays a role in axon growth and the formation of axonal branches. This chain is Spastin, found in Rattus norvegicus (Rat).